A 178-amino-acid polypeptide reads, in one-letter code: Large ribosomal subunit protein uL6 (178 aa).

Belongs to the universal ribosomal protein uL6 family. In terms of assembly, part of the 50S ribosomal subunit.

This protein binds to the 23S rRNA, and is important in its secondary structure. It is located near the subunit interface in the base of the L7/L12 stalk, and near the tRNA binding site of the peptidyltransferase center. This Thermoplasma volcanium (strain ATCC 51530 / DSM 4299 / JCM 9571 / NBRC 15438 / GSS1) protein is Large ribosomal subunit protein uL6.